Consider the following 284-residue polypeptide: MEMO1 family protein SSO0066 (284 aa).

This sequence belongs to the MEMO1 family.

This is MEMO1 family protein SSO0066 from Saccharolobus solfataricus (strain ATCC 35092 / DSM 1617 / JCM 11322 / P2) (Sulfolobus solfataricus).